The following is a 530-amino-acid chain: Glucocorticoid modulatory element-binding protein 2 (530 aa).

The SAND domain maps to glutamate 81–aspartate 163. Residue cysteine 110 coordinates Zn(2+). DNA contacts are provided by lysine 136, lysine 140, lysine 143, and arginine 154. Lysine 155 is covalently cross-linked (Glycyl lysine isopeptide (Lys-Gly) (interchain with G-Cter in SUMO1); alternate). A Glycyl lysine isopeptide (Lys-Gly) (interchain with G-Cter in SUMO2); alternate cross-link involves residue lysine 155. The Zn(2+) site is built by histidine 167, cysteine 171, and cysteine 175. The stretch at glutamine 304–threonine 348 forms a coiled coil. Serine 373 carries the post-translational modification Phosphoserine.

Homodimer, and heterodimer of GMEB1 and GMEB2. GMEB1 and GMEB2 form the parvovirus initiator complex (PIF). Interacts with the glucocorticoid receptor (NR3C1). May interact with CREB-binding protein (CBP). As to expression, expressed in peripheral blood lymphocytes and fetal liver. Expressed preferentially in reproductive and/or developmentally important cells, such as testis, placenta, bone marrow and fetal tissues.

The protein localises to the nucleus. Its subcellular location is the cytoplasm. Functionally, trans-acting factor that binds to glucocorticoid modulatory elements (GME) present in the TAT (tyrosine aminotransferase) promoter and increases sensitivity to low concentrations of glucocorticoids. Also binds to the transferrin receptor promoter. Essential auxiliary factor for the replication of parvoviruses. The protein is Glucocorticoid modulatory element-binding protein 2 (GMEB2) of Homo sapiens (Human).